We begin with the raw amino-acid sequence, 159 residues long: Type IV major alpha-pilin (159 aa).

Residues 1–6 (MNAQKG) constitute a propeptide, leader sequence. At phenylalanine 7 the chain carries N-methylphenylalanine. Residues 7–27 (FTLIELMIVIAIIGILAAIAL) traverse the membrane as a helical segment. Residues 64–87 (VLSEESSTSKENIGLTSSETSTKP) form a disordered region. The segment covering 67–87 (EESSTSKENIGLTSSETSTKP) has biased composition (polar residues). Residues cysteine 137 and cysteine 156 are joined by a disulfide bond.

Belongs to the N-Me-Phe pilin family. Major component of the type IV pilus (T4P) that plays a role in surface and attachment to the host epithelial tissues.

It is found in the fimbrium. It localises to the membrane. This Moraxella bovis protein is Type IV major alpha-pilin (tfpI).